A 292-amino-acid polypeptide reads, in one-letter code: Protease HtpX (292 aa).

Helical transmembrane passes span 5 to 25 (IFLFLLTNLAVLMLAGIVMSL) and 34 to 54 (SGLLVMAAIFGFGGSFISLLL). His-140 serves as a coordination point for Zn(2+). Glu-141 is a catalytic residue. Zn(2+) is bound at residue His-144. 2 helical membrane-spanning segments follow: residues 155-175 (LLQGVLNTFVIVLARVVGGII) and 193-213 (IIVFALEMVFGLFATMIAMWF). Glu-218 is a Zn(2+) binding site.

Belongs to the peptidase M48B family. Requires Zn(2+) as cofactor.

The protein localises to the cell inner membrane. This chain is Protease HtpX, found in Xanthomonas axonopodis pv. citri (strain 306).